Reading from the N-terminus, the 42-residue chain is Tachystatin-B1 (42 aa).

3 cysteine pairs are disulfide-bonded: Cys4-Cys20, Cys11-Cys25, and Cys19-Cys37.

In terms of tissue distribution, granular hemocytes, small secretory granules.

It localises to the secreted. In terms of biological role, exhibits stronger antimicrobial activity against the Gram-positive bacteria (S.aureus (IC(50) is 7.4 ug/ml)) and fungi (C.albicans (IC(50) is 3.0 ug/ml) and P.pastoris (IC(50) is 0.1 ug/ml)) than Gram-negative bacteria (E.coli no inhibition at 100 ug/ml). Binds to chitin (4.3 uM are required to obtain 50% of binding). Does not cause hemolysis on sheep erythrocytes. Has no blocking activity on the P-type calcium channel. This Tachypleus tridentatus (Japanese horseshoe crab) protein is Tachystatin-B1.